The primary structure comprises 65 residues: Large ribosomal subunit protein bL35 (65 aa).

Basic residues predominate over residues methionine 1 to arginine 15. The disordered stretch occupies residues methionine 1 to asparagine 28.

It belongs to the bacterial ribosomal protein bL35 family.

The chain is Large ribosomal subunit protein bL35 from Cyanothece sp. (strain PCC 7425 / ATCC 29141).